Reading from the N-terminus, the 56-residue chain is TSPQREATCTSEVSGCPKIYNPVCGTDGITYSNECVLCSENKKRQTPVLIQKSGPC.

The Kazal-like domain maps to 3–56; it reads PQREATCTSEVSGCPKIYNPVCGTDGITYSNECVLCSENKKRQTPVLIQKSGPC. 3 disulfides stabilise this stretch: cysteine 9–cysteine 38, cysteine 16–cysteine 35, and cysteine 24–cysteine 56.

It localises to the secreted. Functionally, serine protease inhibitor which exhibits anti-trypsin activity. In the pancreas, protects against trypsin-catalyzed premature activation of zymogens. In terms of biological role, in the male reproductive tract, binds to sperm heads where it modulates sperm capacitance by inhibiting calcium uptake and nitrogen oxide (NO) production. This is Serine protease inhibitor Kazal-type 1 (SPINK1) from Sus scrofa (Pig).